The sequence spans 215 residues: MKKIILNLVTAIILAGCSSNPETLKATNDSFQKSETSIPHFSPLATGGVQLPKADDSYSLPNIEVKKGEDIDIRPPLIPLAIIQNSITKFDGERSLIVYPKQQAKLYNLQQVERLLKEEGISSTTDGSILTTDWAKTERIGDKSIEIKYQIEQVMTADVSALTVSILHMRRDGIIFTPNVSDKQYYTSERLNRIVLTLTTAYNKQLRDLSSTLIQ.

The N-terminal stretch at 1–16 (MKKIILNLVTAIILAG) is a signal peptide. Cysteine 17 is lipidated: N-palmitoyl cysteine. The S-diacylglycerol cysteine moiety is linked to residue cysteine 17.

Belongs to the BamC family.

It is found in the cell outer membrane. The protein is Outer membrane protein assembly factor BamC homolog of Haemophilus influenzae (strain ATCC 51907 / DSM 11121 / KW20 / Rd).